A 433-amino-acid chain; its full sequence is Enolase (433 aa).

Glutamine 167 serves as a coordination point for (2R)-2-phosphoglycerate. Glutamate 209 serves as the catalytic Proton donor. Residues aspartate 246, glutamate 291, and aspartate 318 each coordinate Mg(2+). Residues lysine 343, arginine 372, serine 373, and lysine 394 each contribute to the (2R)-2-phosphoglycerate site. Catalysis depends on lysine 343, which acts as the Proton acceptor.

It belongs to the enolase family. As to quaternary structure, component of the RNA degradosome, a multiprotein complex involved in RNA processing and mRNA degradation. Mg(2+) serves as cofactor.

The protein resides in the cytoplasm. The protein localises to the secreted. Its subcellular location is the cell surface. The catalysed reaction is (2R)-2-phosphoglycerate = phosphoenolpyruvate + H2O. The protein operates within carbohydrate degradation; glycolysis; pyruvate from D-glyceraldehyde 3-phosphate: step 4/5. Its function is as follows. Catalyzes the reversible conversion of 2-phosphoglycerate (2-PG) into phosphoenolpyruvate (PEP). It is essential for the degradation of carbohydrates via glycolysis. This is Enolase from Pasteurella multocida (strain Pm70).